Consider the following 194-residue polypeptide: MNSIQMLVGLANPGPEYANTRHNAGAWFIEQLAARYNCTLKHDPKYHGLTGKVIIQDQEFKLLIPTTYMNLSGKAVGSLANFFKIPVESILVAHDELDLEPGVAKLKKGGGHGGHNGLKDIIAKMANQKDFMRLRIGVGHPGHREMVTGWVLGKAAKADQEKMDAAIDEAVRCMEILAKDGVLKAQNRLHSFKP.

Residue Y17 coordinates tRNA. H22 acts as the Proton acceptor in catalysis. Positions 68, 70, and 116 each coordinate tRNA.

This sequence belongs to the PTH family. In terms of assembly, monomer.

The protein resides in the cytoplasm. The enzyme catalyses an N-acyl-L-alpha-aminoacyl-tRNA + H2O = an N-acyl-L-amino acid + a tRNA + H(+). Hydrolyzes ribosome-free peptidyl-tRNAs (with 1 or more amino acids incorporated), which drop off the ribosome during protein synthesis, or as a result of ribosome stalling. Functionally, catalyzes the release of premature peptidyl moieties from peptidyl-tRNA molecules trapped in stalled 50S ribosomal subunits, and thus maintains levels of free tRNAs and 50S ribosomes. This is Peptidyl-tRNA hydrolase from Pseudoalteromonas translucida (strain TAC 125).